The primary structure comprises 211 residues: Thiamine-phosphate synthase (211 aa).

4-amino-2-methyl-5-(diphosphooxymethyl)pyrimidine-binding positions include 37–41 (QLRIK) and asparagine 69. 2 residues coordinate Mg(2+): aspartate 70 and aspartate 89. Serine 108 lines the 4-amino-2-methyl-5-(diphosphooxymethyl)pyrimidine pocket. A 2-[(2R,5Z)-2-carboxy-4-methylthiazol-5(2H)-ylidene]ethyl phosphate-binding site is contributed by 134–136 (TQT). Lysine 137 provides a ligand contact to 4-amino-2-methyl-5-(diphosphooxymethyl)pyrimidine. 2-[(2R,5Z)-2-carboxy-4-methylthiazol-5(2H)-ylidene]ethyl phosphate-binding positions include glycine 166 and 186–187 (VS).

Belongs to the thiamine-phosphate synthase family. Requires Mg(2+) as cofactor.

It carries out the reaction 2-[(2R,5Z)-2-carboxy-4-methylthiazol-5(2H)-ylidene]ethyl phosphate + 4-amino-2-methyl-5-(diphosphooxymethyl)pyrimidine + 2 H(+) = thiamine phosphate + CO2 + diphosphate. The enzyme catalyses 2-(2-carboxy-4-methylthiazol-5-yl)ethyl phosphate + 4-amino-2-methyl-5-(diphosphooxymethyl)pyrimidine + 2 H(+) = thiamine phosphate + CO2 + diphosphate. It catalyses the reaction 4-methyl-5-(2-phosphooxyethyl)-thiazole + 4-amino-2-methyl-5-(diphosphooxymethyl)pyrimidine + H(+) = thiamine phosphate + diphosphate. Its pathway is cofactor biosynthesis; thiamine diphosphate biosynthesis; thiamine phosphate from 4-amino-2-methyl-5-diphosphomethylpyrimidine and 4-methyl-5-(2-phosphoethyl)-thiazole: step 1/1. Condenses 4-methyl-5-(beta-hydroxyethyl)thiazole monophosphate (THZ-P) and 2-methyl-4-amino-5-hydroxymethyl pyrimidine pyrophosphate (HMP-PP) to form thiamine monophosphate (TMP). The protein is Thiamine-phosphate synthase of Salmonella choleraesuis (strain SC-B67).